The sequence spans 327 residues: Pantothenate kinase (327 aa).

105–112 (GSVAVGKS) provides a ligand contact to ATP.

The protein belongs to the prokaryotic pantothenate kinase family.

It is found in the cytoplasm. The enzyme catalyses (R)-pantothenate + ATP = (R)-4'-phosphopantothenate + ADP + H(+). The protein operates within cofactor biosynthesis; coenzyme A biosynthesis; CoA from (R)-pantothenate: step 1/5. The sequence is that of Pantothenate kinase from Cutibacterium acnes (strain DSM 16379 / KPA171202) (Propionibacterium acnes).